A 211-amino-acid chain; its full sequence is Guanylate kinase (211 aa).

Residues 5–184 (GLLIVFSGPS…AAERVKRIIE (180 aa)) enclose the Guanylate kinase-like domain. 12-19 (GPSGVGKG) is a binding site for ATP.

It belongs to the guanylate kinase family.

Its subcellular location is the cytoplasm. It carries out the reaction GMP + ATP = GDP + ADP. In terms of biological role, essential for recycling GMP and indirectly, cGMP. This is Guanylate kinase from Streptococcus pyogenes serotype M1.